The primary structure comprises 179 residues: Large ribosomal subunit protein uL5 (179 aa).

This sequence belongs to the universal ribosomal protein uL5 family. Part of the 50S ribosomal subunit; part of the 5S rRNA/L5/L18/L25 subcomplex. Contacts the 5S rRNA and the P site tRNA. Forms a bridge to the 30S subunit in the 70S ribosome.

In terms of biological role, this is one of the proteins that bind and probably mediate the attachment of the 5S RNA into the large ribosomal subunit, where it forms part of the central protuberance. In the 70S ribosome it contacts protein S13 of the 30S subunit (bridge B1b), connecting the 2 subunits; this bridge is implicated in subunit movement. Contacts the P site tRNA; the 5S rRNA and some of its associated proteins might help stabilize positioning of ribosome-bound tRNAs. The chain is Large ribosomal subunit protein uL5 from Burkholderia mallei (strain NCTC 10247).